Consider the following 210-residue polypeptide: Probable GTP-binding protein EngB (210 aa).

Residues 25–199 (TGIEVAFAGR…RQKLDTWFSE (175 aa)) enclose the EngB-type G domain. Residues 33 to 40 (GRSNAGKS), 60 to 64 (GRTQL), 78 to 81 (DLPG), 145 to 148 (TKTD), and 178 to 180 (FSS) each bind GTP. Residues Ser-40 and Thr-62 each coordinate Mg(2+).

It belongs to the TRAFAC class TrmE-Era-EngA-EngB-Septin-like GTPase superfamily. EngB GTPase family. The cofactor is Mg(2+).

Functionally, necessary for normal cell division and for the maintenance of normal septation. The protein is Probable GTP-binding protein EngB of Escherichia coli O6:K15:H31 (strain 536 / UPEC).